Here is a 525-residue protein sequence, read N- to C-terminus: Estrogen receptor (525 aa).

Residues Pro-1 to Ser-59 are disordered. Residues Pro-1–Phe-82 are modulating. The segment covering Ser-36 to Leu-45 has biased composition (low complexity). 2 NR C4-type zinc fingers span residues Cys-83–Cys-103 and Cys-119–Cys-143. The nuclear receptor DNA-binding region spans Cys-83–Met-148. The segment at Met-149–Met-209 is hinge. A compositionally biased stretch (basic and acidic residues) spans Arg-154 to Thr-182. Residues Arg-154–Lys-203 are disordered. The 237-residue stretch at Ser-210–His-446 folds into the NR LBD domain. Residues Asp-452–Pro-465 are compositionally biased toward basic and acidic residues. A disordered region spans residues Asp-452–Leu-525. A compositionally biased stretch (gly residues) spans Ser-479–Ser-493.

The protein belongs to the nuclear hormone receptor family. NR3 subfamily. In terms of assembly, binds DNA as a homodimer. Can form a heterodimer with ER-beta. As to expression, abundant in the liver, less abundant in the testes and barely detectable in the ovary and brain.

It localises to the nucleus. In terms of biological role, the steroid hormones and their receptors are involved in the regulation of eukaryotic gene expression and affect cellular proliferation and differentiation in target tissues. This Micropogonias undulatus (Atlantic croaker) protein is Estrogen receptor (esr1).